The primary structure comprises 271 residues: Mannosyl-3-phosphoglycerate phosphatase (271 aa).

Aspartate 13 functions as the Nucleophile in the catalytic mechanism. Mg(2+) contacts are provided by aspartate 13, aspartate 15, and aspartate 214.

The protein belongs to the HAD-like hydrolase superfamily. MPGP family. Mg(2+) serves as cofactor.

It localises to the cytoplasm. The catalysed reaction is 2-O-(alpha-D-mannosyl)-3-phosphoglycerate + H2O = (2R)-2-O-(alpha-D-mannosyl)-glycerate + phosphate. This Escherichia coli (strain K12 / DH10B) protein is Mannosyl-3-phosphoglycerate phosphatase.